A 146-amino-acid chain; its full sequence is Probable cyclic pyranopterin monophosphate synthase (146 aa).

Residues 66 to 68 (LTH) and 102 to 103 (ME) each bind substrate. Asp-117 is a catalytic residue.

Belongs to the MoaC family. As to quaternary structure, homohexamer; trimer of dimers.

It catalyses the reaction (8S)-3',8-cyclo-7,8-dihydroguanosine 5'-triphosphate = cyclic pyranopterin phosphate + diphosphate. The protein operates within cofactor biosynthesis; molybdopterin biosynthesis. Its function is as follows. Catalyzes the conversion of (8S)-3',8-cyclo-7,8-dihydroguanosine 5'-triphosphate to cyclic pyranopterin monophosphate (cPMP). The sequence is that of Probable cyclic pyranopterin monophosphate synthase from Aeropyrum pernix (strain ATCC 700893 / DSM 11879 / JCM 9820 / NBRC 100138 / K1).